The chain runs to 157 residues: Endoribonuclease YbeY (157 aa).

Zn(2+) is bound by residues His-123, His-127, and His-133.

This sequence belongs to the endoribonuclease YbeY family. Zn(2+) is required as a cofactor.

The protein localises to the cytoplasm. Its function is as follows. Single strand-specific metallo-endoribonuclease involved in late-stage 70S ribosome quality control and in maturation of the 3' terminus of the 16S rRNA. The chain is Endoribonuclease YbeY from Limosilactobacillus fermentum (strain NBRC 3956 / LMG 18251) (Lactobacillus fermentum).